Here is a 179-residue protein sequence, read N- to C-terminus: Protein P20B (179 aa).

This Vitis vinifera (Grape) protein is Protein P20B.